A 326-amino-acid polypeptide reads, in one-letter code: Vitamin B12 import system permease protein BtuC (326 aa).

The next 9 helical transmembrane spans lie at Trp-15–Glu-35, Leu-61–Phe-81, Pro-88–Gly-108, Leu-112–Leu-132, Leu-146–Phe-166, Gly-184–Ile-204, Gly-240–Ile-260, Val-274–Ala-294, and Glu-302–Leu-322.

It belongs to the binding-protein-dependent transport system permease family. FecCD subfamily. As to quaternary structure, the complex is composed of two ATP-binding proteins (BtuD), two transmembrane proteins (BtuC) and a solute-binding protein (BtuF).

The protein localises to the cell inner membrane. In terms of biological role, part of the ABC transporter complex BtuCDF involved in vitamin B12 import. Involved in the translocation of the substrate across the membrane. The protein is Vitamin B12 import system permease protein BtuC of Escherichia coli (strain SE11).